A 357-amino-acid chain; its full sequence is tRNA N6-adenosine threonylcarbamoyltransferase (357 aa).

His-115 and His-119 together coordinate Fe cation. Residues 137-141 (LASGG), Asp-170, Gly-183, and Asn-281 contribute to the substrate site. A Fe cation-binding site is contributed by Asp-309.

This sequence belongs to the KAE1 / TsaD family. It depends on Fe(2+) as a cofactor.

The protein resides in the cytoplasm. The enzyme catalyses L-threonylcarbamoyladenylate + adenosine(37) in tRNA = N(6)-L-threonylcarbamoyladenosine(37) in tRNA + AMP + H(+). Functionally, required for the formation of a threonylcarbamoyl group on adenosine at position 37 (t(6)A37) in tRNAs that read codons beginning with adenine. Is involved in the transfer of the threonylcarbamoyl moiety of threonylcarbamoyl-AMP (TC-AMP) to the N6 group of A37, together with TsaE and TsaB. TsaD likely plays a direct catalytic role in this reaction. The protein is tRNA N6-adenosine threonylcarbamoyltransferase of Nitrobacter hamburgensis (strain DSM 10229 / NCIMB 13809 / X14).